Here is a 785-residue protein sequence, read N- to C-terminus: Semaphorin-3E (785 aa).

Positions methionine 1–alanine 25 are cleaved as a signal peptide. Residues arginine 36–phenylalanine 520 form the Sema domain. Asparagine 48 carries an N-linked (GlcNAc...) asparagine glycan. Cysteines 109 and 119 form a disulfide. An N-linked (GlcNAc...) asparagine glycan is attached at asparagine 130. Cystine bridges form between cysteine 137-cysteine 146, cysteine 274-cysteine 386, cysteine 298-cysteine 346, and cysteine 523-cysteine 541. The N-linked (GlcNAc...) asparagine glycan is linked to asparagine 600. In terms of domain architecture, Ig-like C2-type spans leucine 651–aspartate 740. Residues cysteine 658 and cysteine 733 are joined by a disulfide bond. Residues lysine 744–serine 785 form a disordered region. Positions glutamine 759–arginine 777 are enriched in basic and acidic residues.

This sequence belongs to the semaphorin family. As to expression, collapsin-1, -2, -3, and -5 bind to overlapping but distinct axon tracts.

The protein localises to the secreted. Functionally, plays an important role in signaling via the cell surface receptor PLXND1. Mediates reorganization of the actin cytoskeleton, leading to the retraction of cell projections. Promotes focal adhesion disassembly and inhibits adhesion of endothelial cells to the extracellular matrix. Regulates angiogenesis. Can down-regulate sprouting angiogenesis. Required for normal vascular patterning during embryogenesis. Induces the collapse and paralysis of neuronal growth cones. Plays an important role in ensuring the specificity of synapse formation. In Gallus gallus (Chicken), this protein is Semaphorin-3E (SEMA3E).